The primary structure comprises 277 residues: Undecaprenyl-diphosphatase 1 (277 aa).

A run of 8 helical transmembrane segments spans residues M1–I21, A39–Y58, F85–F105, F113–I133, M147–L167, S191–I211, A226–V246, and L251–A271.

This sequence belongs to the UppP family.

It localises to the cell membrane. The enzyme catalyses di-trans,octa-cis-undecaprenyl diphosphate + H2O = di-trans,octa-cis-undecaprenyl phosphate + phosphate + H(+). Its function is as follows. Catalyzes the dephosphorylation of undecaprenyl diphosphate (UPP). Confers resistance to bacitracin. This chain is Undecaprenyl-diphosphatase 1, found in Shouchella clausii (strain KSM-K16) (Alkalihalobacillus clausii).